A 442-amino-acid polypeptide reads, in one-letter code: Pentatricopeptide repeat-containing protein At2g27800, mitochondrial (442 aa).

The N-terminal 67 residues, 1 to 67, are a transit peptide targeting the mitochondrion; it reads MSATRSTFLG…SFLPSIHVRF (67 aa). PPR repeat units lie at residues 206–236, 244–286, 287–322, 323–357, 358–392, and 393–427; these read NENL…MVTS, TIRT…GIEP, DVFA…DCEP, NSFT…GFVP, NGKS…GRVV, and DFIS…QLVD.

The protein belongs to the PPR family. P subfamily.

It localises to the mitochondrion. The sequence is that of Pentatricopeptide repeat-containing protein At2g27800, mitochondrial from Arabidopsis thaliana (Mouse-ear cress).